A 215-amino-acid chain; its full sequence is MNKDQSKIPQATAKRLPLYYRFLKNLHASGKQRVSSAELSDAVKVDSATIRRDFSYFGALGKKGYGYNVDYLLSFFRKTLDQDETTNVILIGVGNLGTAFLHYNFTKNNNTKISMAFDVNQSKIGTEVGGVPVFDLNDLELHIKDEPVAILTVPAVAAQSITDRLVSLGIKGILNFTPARLNVPDHIRIHHIDLAVELQSLVYFLKHYSVLEEIE.

Residues 18 to 57 (LYYRFLKNLHASGKQRVSSAELSDAVKVDSATIRRDFSYF) constitute a DNA-binding region (H-T-H motif). Residue 92–97 (GVGNLG) participates in NAD(+) binding.

This sequence belongs to the transcriptional regulatory Rex family. In terms of assembly, homodimer.

The protein localises to the cytoplasm. Functionally, modulates transcription in response to changes in cellular NADH/NAD(+) redox state. This is Redox-sensing transcriptional repressor Rex from Bacillus velezensis (strain DSM 23117 / BGSC 10A6 / LMG 26770 / FZB42) (Bacillus amyloliquefaciens subsp. plantarum).